The sequence spans 545 residues: CTP synthase (545 aa).

An amidoligase domain region spans residues 1–266 (MATNYIFVTG…DTFVCDRFRL (266 aa)). Serine 14 is a binding site for CTP. Serine 14 contacts UTP. ATP-binding positions include 15-20 (SLGKGI) and aspartate 72. 2 residues coordinate Mg(2+): aspartate 72 and glutamate 140. Residues 147–149 (DIE), 187–192 (KTKPTQ), and lysine 223 contribute to the CTP site. UTP-binding positions include 187–192 (KTKPTQ) and lysine 223. An ATP-binding site is contributed by 239–241 (KDV). The region spanning 291-542 (TIGMVGKYVE…VAAAKAYQDS (252 aa)) is the Glutamine amidotransferase type-1 domain. Glycine 352 is an L-glutamine binding site. Cysteine 379 serves as the catalytic Nucleophile; for glutamine hydrolysis. L-glutamine contacts are provided by residues 380–383 (LGMQ), glutamate 403, and arginine 470. Residues histidine 515 and glutamate 517 contribute to the active site.

Belongs to the CTP synthase family. In terms of assembly, homotetramer.

It carries out the reaction UTP + L-glutamine + ATP + H2O = CTP + L-glutamate + ADP + phosphate + 2 H(+). The catalysed reaction is L-glutamine + H2O = L-glutamate + NH4(+). It catalyses the reaction UTP + NH4(+) + ATP = CTP + ADP + phosphate + 2 H(+). Its pathway is pyrimidine metabolism; CTP biosynthesis via de novo pathway; CTP from UDP: step 2/2. With respect to regulation, allosterically activated by GTP, when glutamine is the substrate; GTP has no effect on the reaction when ammonia is the substrate. The allosteric effector GTP functions by stabilizing the protein conformation that binds the tetrahedral intermediate(s) formed during glutamine hydrolysis. Inhibited by the product CTP, via allosteric rather than competitive inhibition. In terms of biological role, catalyzes the ATP-dependent amination of UTP to CTP with either L-glutamine or ammonia as the source of nitrogen. Regulates intracellular CTP levels through interactions with the four ribonucleotide triphosphates. The chain is CTP synthase from Actinobacillus pleuropneumoniae serotype 5b (strain L20).